Consider the following 102-residue polypeptide: PqqA binding protein (102 aa).

The protein belongs to the PqqD family. In terms of assembly, monomer. Interacts with PqqE.

Its pathway is cofactor biosynthesis; pyrroloquinoline quinone biosynthesis. Its function is as follows. Functions as a PqqA binding protein and presents PqqA to PqqE, in the pyrroloquinoline quinone (PQQ) biosynthetic pathway. This chain is PqqA binding protein, found in Rhodopseudomonas palustris (strain TIE-1).